The following is a 499-amino-acid chain: MAPIPGVMPIGNYVSLYVMLPLGVVNADNVFPDKEKVEDELKQVKAGGCDGVMVDVWWGIIEAKGPKQYDWSAYRELFQLVKKCGLKIQAIMSFHQCGGNVGDAVFIPIPQWILQIGDKNPDIFYTNRAGNRNQEYLSLGVDNQRLFQGRTALEMYRDFMESFRDNMADFLKAGDIVDIEVGCGAAGELRYPSYPETQGWVFPGIGEFQCYDKYMVADWKEAVKQAGNADWEMPGKGAGTYNDTPDKTEFFRPNGTYKTDMGKFFLTWYSNKLIIHGDQVLEEANKVFVGLRVNIAAKVSGIHWWYNHVSHAAELTAGFYNVAGRDGYRPIARMLARHHATLNFTCLEMRDSEQPAEAKSAPQELVQQVLSSGWKEYIDVAGENALPRYDATAYNQMLLNVRPNGVNLNGPPKLKMSGLTYLRLSDDLLQTDNFELFKKFVKKMHADLDPSPNAISPAVLERSNSAITIDELMEATKGSRPFPWYDVTDMPVDGSNPFD.

The substrate site is built by aspartate 55, histidine 95, and aspartate 103. Residue glutamate 188 is the Proton donor of the active site. Positions 298, 303, and 345 each coordinate substrate. Glutamate 383 acts as the Proton acceptor in catalysis. Substrate is bound by residues 384–385 (NA) and arginine 423.

It belongs to the glycosyl hydrolase 14 family. Homotetramer.

The catalysed reaction is Hydrolysis of (1-&gt;4)-alpha-D-glucosidic linkages in polysaccharides so as to remove successive maltose units from the non-reducing ends of the chains.. In Ipomoea batatas (Sweet potato), this protein is Beta-amylase (BMY1).